The primary structure comprises 270 residues: Tetraspanin-17 (270 aa).

Over 1–19 (MPGKHQQFQDPEVGCCGKY) the chain is Cytoplasmic. Residues 20-40 (FLFGFNIVFWVLGALFLAIGL) traverse the membrane as a helical segment. At 41 to 63 (WAWGEKGVLSNISALTDLGGLDP) the chain is on the extracellular side. Asparagine 51 carries N-linked (GlcNAc...) asparagine glycosylation. Residues 64 to 84 (VWLFVVVGGVMSVLGFAGCIG) traverse the membrane as a helical segment. Topologically, residues 85–94 (ALRENTFLLK) are cytoplasmic. Residues 95–115 (FFSVFLGLIFFLELAAGILAF) traverse the membrane as a helical segment. Over 116 to 234 (VFKDWIRDQL…GQFEKWLQDN (119 aa)) the chain is Extracellular. Cystine bridges form between cysteine 155/cysteine 223, cysteine 156/cysteine 188, cysteine 172/cysteine 182, and cysteine 189/cysteine 202. Asparagine 171 carries an N-linked (GlcNAc...) asparagine glycan. A helical transmembrane segment spans residues 235–255 (LIVVAGVLVGIALLQIFGLCL). At 256–270 (AQNLVSDIKAVKANW) the chain is on the cytoplasmic side.

This sequence belongs to the tetraspanin (TM4SF) family. In terms of assembly, interacts with ADAM10; the interaction influences ADAM10 substrate specificity, endocytosis and turnover.

It localises to the cell membrane. In terms of biological role, part of TspanC8 subgroup, composed of 6 members that interact with the transmembrane metalloprotease ADAM10. This interaction is required for ADAM10 exit from the endoplasmic reticulum and for enzymatic maturation and trafficking to the cell surface as well as substrate specificity. Different TspanC8/ADAM10 complexes have distinct substrates. Seems to regulate VE-cadherin expression in endothelial cells probably through interaction with ADAM10, promoting leukocyte transmigration. In Mus musculus (Mouse), this protein is Tetraspanin-17 (Tspan17).